A 698-amino-acid chain; its full sequence is UvrABC system protein B (698 aa).

The Helicase ATP-binding domain occupies 35–210; it reads ARLQAGEKDI…TFRVRGDTVE (176 aa). ATP is bound at residue 48 to 55; that stretch reads GATGTGKS. The short motif at 101-124 is the Beta-hairpin element; it reads YYDYYQPEAYVPSSDTYIEKDSSI. Residues 438–604 enclose the Helicase C-terminal domain; the sequence is QIDDLLAEIN…PLRKRIGDIT (167 aa). One can recognise a UVR domain in the interval 654 to 689; that stretch reads AELIQELTDQMHVAAGELQFEVAARLRDEISDLKKE.

This sequence belongs to the UvrB family. In terms of assembly, forms a heterotetramer with UvrA during the search for lesions. Interacts with UvrC in an incision complex.

Its subcellular location is the cytoplasm. Its function is as follows. The UvrABC repair system catalyzes the recognition and processing of DNA lesions. A damage recognition complex composed of 2 UvrA and 2 UvrB subunits scans DNA for abnormalities. Upon binding of the UvrA(2)B(2) complex to a putative damaged site, the DNA wraps around one UvrB monomer. DNA wrap is dependent on ATP binding by UvrB and probably causes local melting of the DNA helix, facilitating insertion of UvrB beta-hairpin between the DNA strands. Then UvrB probes one DNA strand for the presence of a lesion. If a lesion is found the UvrA subunits dissociate and the UvrB-DNA preincision complex is formed. This complex is subsequently bound by UvrC and the second UvrB is released. If no lesion is found, the DNA wraps around the other UvrB subunit that will check the other stand for damage. The polypeptide is UvrABC system protein B (Beutenbergia cavernae (strain ATCC BAA-8 / DSM 12333 / CCUG 43141 / JCM 11478 / NBRC 16432 / NCIMB 13614 / HKI 0122)).